The following is a 104-amino-acid chain: Large ribosomal subunit protein uL24 (104 aa).

The protein belongs to the universal ribosomal protein uL24 family. As to quaternary structure, part of the 50S ribosomal subunit.

Functionally, one of two assembly initiator proteins, it binds directly to the 5'-end of the 23S rRNA, where it nucleates assembly of the 50S subunit. In terms of biological role, one of the proteins that surrounds the polypeptide exit tunnel on the outside of the subunit. This Halothermothrix orenii (strain H 168 / OCM 544 / DSM 9562) protein is Large ribosomal subunit protein uL24.